Reading from the N-terminus, the 461-residue chain is Kynurenine 3-monooxygenase (461 aa).

The next 2 helical transmembrane spans lie at 395-415 (TIMN…VTFS) and 432-452 (ILSR…AAGI).

Belongs to the aromatic-ring hydroxylase family. KMO subfamily. The cofactor is FAD.

The protein resides in the mitochondrion. The protein localises to the membrane. It catalyses the reaction L-kynurenine + NADPH + O2 + H(+) = 3-hydroxy-L-kynurenine + NADP(+) + H2O. It functions in the pathway cofactor biosynthesis; NAD(+) biosynthesis; quinolinate from L-kynurenine: step 1/3. Its function is as follows. Catalyzes the hydroxylation of L-kynurenine (L-Kyn) to form 3-hydroxy-L-kynurenine (L-3OHKyn). Required for synthesis of quinolinic acid. This Caenorhabditis elegans protein is Kynurenine 3-monooxygenase.